A 474-amino-acid chain; its full sequence is MDTAVVWFRDDLRVTDNPTLADAVAAAETVIPVYTFDPDRYTESEYGPPKTGGHRAVFRRQAVADLRASLRDRGGDLLVRSGRPATVVPELAQRAGADAVYAQTKPATEERRRAADVASALDDAGIALRQRWTHTLYHPDDLPTPPTDIDDTFTPWRKETEAAATVRDPRSAPETVPTPDGLTPGPVPTVESLGVSEPPTDDRAVLEFEGGESAGKRRVESYIWEGDHLREYKTTRNGLLGADYSSKFSPWLAAGCLSPRWLHREVERYEDERVANEDTYWLVFELAWRDFFQFQFEKYGATFFKPGGIRERNIDWDRDRALFERWADGETGVPFVDANMRELNRTGYMSNRGRQNVASFLAGVLGIDWRWGAAYFEARLIDYDVASNWGNWAYQAGVGNDSRDRYFDVRSQAERYDSDAEYITTWLPELAALPATIAHQPWQLSEAEQREYGVELGVDYPEPVVDIDARYQSL.

A Photolyase/cryptochrome alpha/beta domain is found at 2-136 (DTAVVWFRDD…ALRQRWTHTL (135 aa)). Residues 161–171 (EAAATVRDPRS) show a composition bias toward basic and acidic residues. Residues 161-202 (EAAATVRDPRSAPETVPTPDGLTPGPVPTVESLGVSEPPTDD) are disordered.

This sequence belongs to the DNA photolyase class-1 family. It depends on FAD as a cofactor. (6R)-5,10-methylene-5,6,7,8-tetrahydrofolate serves as cofactor.

In terms of biological role, may have a photoreceptor function. Binds DNA; probably functions as a transcriptional repressor. This chain is Cryptochrome DASH (cry), found in Natronomonas pharaonis (strain ATCC 35678 / DSM 2160 / CIP 103997 / JCM 8858 / NBRC 14720 / NCIMB 2260 / Gabara) (Halobacterium pharaonis).